The primary structure comprises 48 residues: Delta-stichotoxin-Hcr1e (48 aa).

3 disulfides stabilise this stretch: Cys3-Cys43, Cys5-Cys33, and Cys26-Cys44.

This sequence belongs to the sea anemone sodium channel inhibitory toxin family. Type II subfamily.

The protein localises to the secreted. It localises to the nematocyst. Its function is as follows. Binds to site 3 of voltage-gated sodium channels and inhibits the inactivation process. In Radianthus crispa (Leathery sea anemone), this protein is Delta-stichotoxin-Hcr1e.